The following is a 565-amino-acid chain: Alkaline nuclease (565 aa).

It belongs to the herpesviridae alkaline nuclease family. As to quaternary structure, interacts with major DNA-binding protein; this interaction increases the nuclease processivity of the alkaline exonuclease.

The protein resides in the host nucleus. It is found in the host cytoplasm. Its function is as follows. Plays a role in processing non linear or branched viral DNA intermediates in order to promote the production of mature packaged unit-length linear progeny viral DNA molecules. Exhibits endonuclease and exonuclease activities and accepts both double-stranded and single-stranded DNA as substrate. Exonuclease digestion of DNA is in the 5'-&gt; 3' direction and the products are 5'-monophosphate nucleosides. Additionally, forms a recombinase with the major DNA-binding protein, which displays strand exchange activity. In Equus caballus (Horse), this protein is Alkaline nuclease.